The primary structure comprises 333 residues: Ferrochelatase (333 aa).

Fe cation is bound by residues His202 and Glu284.

This sequence belongs to the ferrochelatase family.

Its subcellular location is the cytoplasm. The catalysed reaction is heme b + 2 H(+) = protoporphyrin IX + Fe(2+). It functions in the pathway porphyrin-containing compound metabolism; protoheme biosynthesis; protoheme from protoporphyrin-IX: step 1/1. Functionally, catalyzes the ferrous insertion into protoporphyrin IX. This Francisella tularensis subsp. novicida (strain U112) protein is Ferrochelatase.